Reading from the N-terminus, the 334-residue chain is Aspartate carbamoyltransferase catalytic subunit (334 aa).

Carbamoyl phosphate-binding residues include Arg71 and Thr72. An L-aspartate-binding site is contributed by Lys99. Carbamoyl phosphate-binding residues include Arg121, His151, and Gln154. The L-aspartate site is built by Arg184 and Arg239. Carbamoyl phosphate is bound by residues Gly280 and Pro281.

Belongs to the aspartate/ornithine carbamoyltransferase superfamily. ATCase family. As to quaternary structure, heterododecamer (2C3:3R2) of six catalytic PyrB chains organized as two trimers (C3), and six regulatory PyrI chains organized as three dimers (R2).

The catalysed reaction is carbamoyl phosphate + L-aspartate = N-carbamoyl-L-aspartate + phosphate + H(+). The protein operates within pyrimidine metabolism; UMP biosynthesis via de novo pathway; (S)-dihydroorotate from bicarbonate: step 2/3. Functionally, catalyzes the condensation of carbamoyl phosphate and aspartate to form carbamoyl aspartate and inorganic phosphate, the committed step in the de novo pyrimidine nucleotide biosynthesis pathway. This chain is Aspartate carbamoyltransferase catalytic subunit, found in Pseudomonas fluorescens (strain SBW25).